Reading from the N-terminus, the 583-residue chain is MSVVDKNYHKKTYHKYDHNKWVLIIYVKSVSHETNIDKFFYENTIDSLDSVINISSICLYTLNDQLSKILVDIQPKCKIPINLCVDSDNDILNTMKLHLDNNLSIIYFTNNTGFSVQQKQCHSLDCLSAYTTCIYDDLYSKVLNKFGLSKLITFDTLVVPNNNDSRKFIDNCIYFCRKLIGTDNEFKINLSLTITDSRMGYIVKDLETDLEIPNNNFVRNIVDKSFRQYLTEQFCSVKNNFKKCELPWKDDNFIYYPYLDMNVFPCDESVQNISYTSCNTNGFITNETNPFGKLFTRFNNPYEGVYLKKPQNNIQIPKHLHHIWIDEEPSINYINLWKTILVEPWKYTIWDNNSVLDLIKDTHWDQMYNCAKQSRQKQLIAMLSILEKYGGITINAYNIPLKSLDSLTIGNKFFVSFLAEDTGTSLSYRIIGSLPGGLGKNMIDPNISRKPYEGINNFFRSVNYNKTNDFVIPEIFDKLKSLLHVSVLNSNNTHNNFSKEIDYFLLSLSGQNIFIYPSYYFNANISTLPKRLSNKIIMINLQKYPDKKPIRIKTEVHRPYVVTKEAIADQLNENPKDKLKNIK.

This is an uncharacterized protein from Acanthamoeba polyphaga (Amoeba).